We begin with the raw amino-acid sequence, 337 residues long: D-alanine--D-alanine ligase (337 aa).

The ATP-grasp domain occupies Lys124–Asn330. Ala154–Glu209 provides a ligand contact to ATP. Mg(2+)-binding residues include Asp284, Glu297, and Asn299.

This sequence belongs to the D-alanine--D-alanine ligase family. Mg(2+) is required as a cofactor. It depends on Mn(2+) as a cofactor.

The protein resides in the cytoplasm. It catalyses the reaction 2 D-alanine + ATP = D-alanyl-D-alanine + ADP + phosphate + H(+). The protein operates within cell wall biogenesis; peptidoglycan biosynthesis. Functionally, cell wall formation. This Shewanella sp. (strain W3-18-1) protein is D-alanine--D-alanine ligase.